A 220-amino-acid polypeptide reads, in one-letter code: Pyridoxine/pyridoxamine 5'-phosphate oxidase (220 aa).

Residues 69-74, 84-85, Arg90, Lys91, and Gln113 contribute to the FMN site; these read RVVLLK and YT. Position 74 (Lys74) interacts with substrate. The substrate site is built by Tyr131, Arg135, and Ser139. FMN contacts are provided by residues 148–149 and Trp193; that span reads QS. 199 to 201 is a substrate binding site; it reads RLH. Arg203 is a binding site for FMN.

Belongs to the pyridoxamine 5'-phosphate oxidase family. Homodimer. FMN is required as a cofactor.

It catalyses the reaction pyridoxamine 5'-phosphate + O2 + H2O = pyridoxal 5'-phosphate + H2O2 + NH4(+). It carries out the reaction pyridoxine 5'-phosphate + O2 = pyridoxal 5'-phosphate + H2O2. The protein operates within cofactor metabolism; pyridoxal 5'-phosphate salvage; pyridoxal 5'-phosphate from pyridoxamine 5'-phosphate: step 1/1. Its pathway is cofactor metabolism; pyridoxal 5'-phosphate salvage; pyridoxal 5'-phosphate from pyridoxine 5'-phosphate: step 1/1. Its function is as follows. Catalyzes the oxidation of either pyridoxine 5'-phosphate (PNP) or pyridoxamine 5'-phosphate (PMP) into pyridoxal 5'-phosphate (PLP). This is Pyridoxine/pyridoxamine 5'-phosphate oxidase from Myxococcus xanthus.